The chain runs to 218 residues: Large ribosomal subunit protein uL3 (218 aa).

Disordered stretches follow at residues 128 to 167 (FSRG…RMGG) and 199 to 218 (SLLN…QGGK).

This sequence belongs to the universal ribosomal protein uL3 family. As to quaternary structure, part of the 50S ribosomal subunit. Forms a cluster with proteins L14 and L19.

Functionally, one of the primary rRNA binding proteins, it binds directly near the 3'-end of the 23S rRNA, where it nucleates assembly of the 50S subunit. The polypeptide is Large ribosomal subunit protein uL3 (Prochlorococcus marinus (strain NATL2A)).